Here is a 356-residue protein sequence, read N- to C-terminus: Peptide chain release factor 1 (356 aa).

Residue glutamine 233 is modified to N5-methylglutamine.

The protein belongs to the prokaryotic/mitochondrial release factor family. Post-translationally, methylated by PrmC. Methylation increases the termination efficiency of RF1.

Its subcellular location is the cytoplasm. Peptide chain release factor 1 directs the termination of translation in response to the peptide chain termination codons UAG and UAA. The polypeptide is Peptide chain release factor 1 (Endomicrobium trichonymphae).